Reading from the N-terminus, the 163-residue chain is Shikimate kinase (163 aa).

10-15 serves as a coordination point for ATP; the sequence is GVGKTT. Residue threonine 14 participates in Mg(2+) binding. Residues aspartate 28, arginine 52, and glycine 75 each contribute to the substrate site. An ATP-binding site is contributed by arginine 116. Arginine 134 serves as a coordination point for substrate. Position 151 (arginine 151) interacts with ATP.

Belongs to the shikimate kinase family. In terms of assembly, monomer. It depends on Mg(2+) as a cofactor.

The protein resides in the cytoplasm. The enzyme catalyses shikimate + ATP = 3-phosphoshikimate + ADP + H(+). The protein operates within metabolic intermediate biosynthesis; chorismate biosynthesis; chorismate from D-erythrose 4-phosphate and phosphoenolpyruvate: step 5/7. Its function is as follows. Catalyzes the specific phosphorylation of the 3-hydroxyl group of shikimic acid using ATP as a cosubstrate. This Streptococcus pyogenes serotype M12 (strain MGAS2096) protein is Shikimate kinase.